The primary structure comprises 537 residues: Putative cysteine ligase BshC (537 aa).

Residues 422–450 adopt a coiled-coil conformation; that stretch reads IEKVEGMIEQQRRLNQDLLDEVAGNQNNI.

The protein belongs to the BshC family.

Functionally, involved in bacillithiol (BSH) biosynthesis. May catalyze the last step of the pathway, the addition of cysteine to glucosamine malate (GlcN-Mal) to generate BSH. This Staphylococcus aureus (strain bovine RF122 / ET3-1) protein is Putative cysteine ligase BshC.